A 291-amino-acid polypeptide reads, in one-letter code: Acetyl-coenzyme A carboxylase carboxyl transferase subunit beta (291 aa).

Residues 36–291 (MWVKCDGCGK…KILVIHGRGN (256 aa)) form the CoA carboxyltransferase N-terminal domain. Zn(2+) is bound by residues Cys-40, Cys-43, Cys-59, and Cys-62. The segment at 40–62 (CDGCGKVLYKNDMEKNNKVCYHC) adopts a C4-type zinc-finger fold.

This sequence belongs to the AccD/PCCB family. As to quaternary structure, acetyl-CoA carboxylase is a heterohexamer composed of biotin carboxyl carrier protein (AccB), biotin carboxylase (AccC) and two subunits each of ACCase subunit alpha (AccA) and ACCase subunit beta (AccD). Requires Zn(2+) as cofactor.

Its subcellular location is the cytoplasm. The catalysed reaction is N(6)-carboxybiotinyl-L-lysyl-[protein] + acetyl-CoA = N(6)-biotinyl-L-lysyl-[protein] + malonyl-CoA. Its pathway is lipid metabolism; malonyl-CoA biosynthesis; malonyl-CoA from acetyl-CoA: step 1/1. In terms of biological role, component of the acetyl coenzyme A carboxylase (ACC) complex. Biotin carboxylase (BC) catalyzes the carboxylation of biotin on its carrier protein (BCCP) and then the CO(2) group is transferred by the transcarboxylase to acetyl-CoA to form malonyl-CoA. This is Acetyl-coenzyme A carboxylase carboxyl transferase subunit beta from Clostridium kluyveri (strain NBRC 12016).